The chain runs to 827 residues: Cytosolic Fe-S cluster assembly factor NAR1 (827 aa).

Residue cysteine 22 coordinates [4Fe-4S] cluster. The disordered stretch occupies residues 57 to 77 (AYYESSTPPSSSLSAADSRPR). Residues 61–73 (SSTPPSSSLSAAD) are compositionally biased toward low complexity. Cysteine 92, cysteine 95, and cysteine 98 together coordinate [4Fe-4S] cluster. The disordered stretch occupies residues 209–231 (RENARKRAKLSNAPADDDDRLHP). Positions 246, 307, 591, and 595 each coordinate [4Fe-4S] cluster. 2 disordered regions span residues 599 to 637 (GGQIRPPTQSDVDVTRSSTTVDNHATDPEGYTKGGWAAD) and 709 to 739 (DQGGANDSGSSTPTLVGSGANTPLSSSNAKS). 2 stretches are compositionally biased toward polar residues: residues 604-621 (PPTQSDVDVTRSSTTVDN) and 713-738 (ANDSGSSTPTLVGSGANTPLSSSNAK).

The protein belongs to the NARF family.

Its function is as follows. Component of the cytosolic Fe/S protein assembly machinery. Required for maturation of extramitochondrial Fe/S proteins. May play a role in the transfer of pre-assembled Fe/S clusters to target apoproteins. The chain is Cytosolic Fe-S cluster assembly factor NAR1 (NAR1) from Mycosarcoma maydis (Corn smut fungus).